The primary structure comprises 396 residues: Tryptophan synthase beta chain (396 aa).

Residue K86 is modified to N6-(pyridoxal phosphate)lysine.

This sequence belongs to the TrpB family. In terms of assembly, tetramer of two alpha and two beta chains. Pyridoxal 5'-phosphate serves as cofactor.

It catalyses the reaction (1S,2R)-1-C-(indol-3-yl)glycerol 3-phosphate + L-serine = D-glyceraldehyde 3-phosphate + L-tryptophan + H2O. It participates in amino-acid biosynthesis; L-tryptophan biosynthesis; L-tryptophan from chorismate: step 5/5. In terms of biological role, the beta subunit is responsible for the synthesis of L-tryptophan from indole and L-serine. The polypeptide is Tryptophan synthase beta chain (Francisella tularensis subsp. holarctica (strain FTNF002-00 / FTA)).